Consider the following 259-residue polypeptide: Protein unc-50 homolog (259 aa).

Methionine 1 is subject to N-acetylmethionine. Residues 1 to 82 (MLPSTSVNSL…TKDQWARDDP (82 aa)) are Cytoplasmic-facing. Serine 6 bears the Phosphoserine mark. Residues 83–103 (AFLVLLSIWLCVSTIGFGFVL) form a helical membrane-spanning segment. The Lumenal segment spans residues 104–115 (DMGFFETIKLLL). A helical transmembrane segment spans residues 116 to 136 (WVVLIDCVGVGLLIATLMWFI). At 137-163 (SNKYLVKRQSRDYDVEWGYAFDVHLNA) the chain is on the cytoplasmic side. Residues 164–184 (FYPLLVILHFIQLFFINHVIL) traverse the membrane as a helical segment. Residues 185-187 (TDT) lie on the Lumenal side of the membrane. The chain crosses the membrane as a helical span at residues 188 to 208 (FIGYLVGNTLWLVAVGYYIYV). Topologically, residues 209 to 222 (TFLGYSALPFLKNT) are cytoplasmic. Residues 223–243 (VILLYPFAPLILLYGLSLALG) form a helical membrane-spanning segment. Topologically, residues 244–259 (WNFTHTLCSFYKYRVK) are lumenal.

Belongs to the unc-50 family. As to expression, present in periodontal ligament fibroblasts (at protein level).

It localises to the nucleus inner membrane. The protein resides in the golgi apparatus membrane. In terms of biological role, involved in the cell surface expression of neuronal nicotinic receptors. Binds RNA. The polypeptide is Protein unc-50 homolog (UNC50) (Homo sapiens (Human)).